A 96-amino-acid polypeptide reads, in one-letter code: Small ribosomal subunit protein bS6 (96 aa).

Belongs to the bacterial ribosomal protein bS6 family.

In terms of biological role, binds together with bS18 to 16S ribosomal RNA. This is Small ribosomal subunit protein bS6 from Streptococcus pneumoniae serotype 2 (strain D39 / NCTC 7466).